The chain runs to 581 residues: Ketol-acid reductoisomerase, chloroplastic (581 aa).

The transit peptide at Met-1–Val-50 directs the protein to the chloroplast. A KARI N-terminal Rossmann domain is found at Val-92–Thr-290. Residues Gly-113 to Gln-120, Arg-146 to Ser-151, and Ser-185 to Gln-189 contribute to the NADP(+) site. The active site involves His-210. KARI C-terminal knotted domains are found at residues Thr-291 to Gly-439 and Asp-440 to Leu-576. Residues Asp-299, Glu-303, Glu-476, and Glu-480 each coordinate Mg(2+). Ser-502 provides a ligand contact to substrate.

Belongs to the ketol-acid reductoisomerase family. In terms of assembly, homodimer. Requires Mg(2+) as cofactor.

The protein resides in the plastid. The protein localises to the chloroplast. The catalysed reaction is (2R)-2,3-dihydroxy-3-methylbutanoate + NADP(+) = (2S)-2-acetolactate + NADPH + H(+). It catalyses the reaction (2R,3R)-2,3-dihydroxy-3-methylpentanoate + NADP(+) = (S)-2-ethyl-2-hydroxy-3-oxobutanoate + NADPH + H(+). It participates in amino-acid biosynthesis; L-isoleucine biosynthesis; L-isoleucine from 2-oxobutanoate: step 2/4. It functions in the pathway amino-acid biosynthesis; L-valine biosynthesis; L-valine from pyruvate: step 2/4. The chain is Ketol-acid reductoisomerase, chloroplastic (PGAAIR) from Pisum sativum (Garden pea).